A 532-amino-acid polypeptide reads, in one-letter code: Protein PTST homolog 2, chloroplastic (532 aa).

The transit peptide at 1-71 (MVSINSGPIS…KPRKKSCCSR (71 aa)) directs the protein to the chloroplast. Disordered stretches follow at residues 165–201 (QLPN…SRND), 256–292 (EVDG…SETW), 314–347 (SSGL…EDVN), and 367–388 (HSLR…TAGN). Basic and acidic residues predominate over residues 173–183 (EMDKTLNHGDL). Basic and acidic residues predominate over residues 320–339 (VKKDDTKKDSGDSMNGKDRI). Residues 389-454 (LENLSDDWEY…ASRALRLLRT (66 aa)) adopt a coiled-coil conformation.

Interacts with PTST3 and SS4. Interacts with MFP1; the interaction is essential for the initiation of starch granules biosynthesis in leaf chloroplasts, for the correct location of the process in the stromal spaces between the thylakoid membranes, and for the association of this protein with the thylakoid membranes. Interacts with PII1/MRC; the interaction is essential for the initiation of starch granules biosynthesis in leaf chloroplasts.

The protein resides in the plastid. The protein localises to the chloroplast. It is found in the chloroplast thylakoid membrane. Involved in starch granule initiation in leaf chloroplasts. Binds and delivers suitable maltooligosaccharide substrates to starch synthase 4 (SS4). The chain is Protein PTST homolog 2, chloroplastic from Arabidopsis thaliana (Mouse-ear cress).